A 400-amino-acid polypeptide reads, in one-letter code: Argininosuccinate synthase (400 aa).

Residues 10-18 (AYSGGVDTS) and A38 contribute to the ATP site. Residue Y89 coordinates L-citrulline. G119 serves as a coordination point for ATP. L-aspartate-binding residues include T121, N125, and D126. N125 is a binding site for L-citrulline. The L-citrulline site is built by R129, S177, S186, E262, and Y274.

Belongs to the argininosuccinate synthase family. Type 1 subfamily. In terms of assembly, homotetramer.

It localises to the cytoplasm. It carries out the reaction L-citrulline + L-aspartate + ATP = 2-(N(omega)-L-arginino)succinate + AMP + diphosphate + H(+). Its pathway is amino-acid biosynthesis; L-arginine biosynthesis; L-arginine from L-ornithine and carbamoyl phosphate: step 2/3. This Prochlorococcus marinus (strain NATL2A) protein is Argininosuccinate synthase.